The chain runs to 186 residues: Large ribosomal subunit protein eL18B (186 aa).

An N6,N6,N6-trimethyllysine modification is found at lysine 50. Lysine 116 participates in a covalent cross-link: Glycyl lysine isopeptide (Lys-Gly) (interchain with G-Cter in ubiquitin).

Belongs to the eukaryotic ribosomal protein eL18 family. As to quaternary structure, component of the large ribosomal subunit (LSU). Mature yeast ribosomes consist of a small (40S) and a large (60S) subunit. The 40S small subunit contains 1 molecule of ribosomal RNA (18S rRNA) and 33 different proteins (encoded by 57 genes). The large 60S subunit contains 3 rRNA molecules (25S, 5.8S and 5S rRNA) and 46 different proteins (encoded by 81 genes). eL18 interacts with NAP1.

Its subcellular location is the cytoplasm. Its function is as follows. Component of the ribosome, a large ribonucleoprotein complex responsible for the synthesis of proteins in the cell. The small ribosomal subunit (SSU) binds messenger RNAs (mRNAs) and translates the encoded message by selecting cognate aminoacyl-transfer RNA (tRNA) molecules. The large subunit (LSU) contains the ribosomal catalytic site termed the peptidyl transferase center (PTC), which catalyzes the formation of peptide bonds, thereby polymerizing the amino acids delivered by tRNAs into a polypeptide chain. The nascent polypeptides leave the ribosome through a tunnel in the LSU and interact with protein factors that function in enzymatic processing, targeting, and the membrane insertion of nascent chains at the exit of the ribosomal tunnel. In Saccharomyces cerevisiae (strain ATCC 204508 / S288c) (Baker's yeast), this protein is Large ribosomal subunit protein eL18B.